Consider the following 138-residue polypeptide: Large ribosomal subunit protein uL16 (138 aa).

Basic residues predominate over residues 1-13; it reads MLQPKRRKYRKEQ. The tract at residues 1-24 is disordered; that stretch reads MLQPKRRKYRKEQKGRNTGKATRG.

The protein belongs to the universal ribosomal protein uL16 family. In terms of assembly, part of the 50S ribosomal subunit.

In terms of biological role, binds 23S rRNA and is also seen to make contacts with the A and possibly P site tRNAs. This chain is Large ribosomal subunit protein uL16, found in Burkholderia multivorans (strain ATCC 17616 / 249).